Here is a 146-residue protein sequence, read N- to C-terminus: D-aminoacyl-tRNA deacylase (146 aa).

Residues Gly-137 to Pro-138 carry the Gly-cisPro motif, important for rejection of L-amino acids motif.

This sequence belongs to the DTD family. As to quaternary structure, homodimer.

Its subcellular location is the cytoplasm. It catalyses the reaction glycyl-tRNA(Ala) + H2O = tRNA(Ala) + glycine + H(+). It carries out the reaction a D-aminoacyl-tRNA + H2O = a tRNA + a D-alpha-amino acid + H(+). An aminoacyl-tRNA editing enzyme that deacylates mischarged D-aminoacyl-tRNAs. Also deacylates mischarged glycyl-tRNA(Ala), protecting cells against glycine mischarging by AlaRS. Acts via tRNA-based rather than protein-based catalysis; rejects L-amino acids rather than detecting D-amino acids in the active site. By recycling D-aminoacyl-tRNA to D-amino acids and free tRNA molecules, this enzyme counteracts the toxicity associated with the formation of D-aminoacyl-tRNA entities in vivo and helps enforce protein L-homochirality. This is D-aminoacyl-tRNA deacylase from Bacillus thuringiensis subsp. konkukian (strain 97-27).